Consider the following 370-residue polypeptide: MRLDEIKIQNFRKHSELIFSPSEGINLIFGPNGSGKTNILEAIHYCALTKGFNRTTDRQCMNFSAESFLLKSLFTSDTGCQYRVHVDFSTNGGKSISLNNSQLEKFSALIGLIPCILFSPAEITIVHGSPQERRRFLDNALCQISKSYLEQLLQYRRILQQRNALLHSSWDRSSPAPDMNIWTELLAESGAFIIKERMDFLDEFQPYFSNAYAILDTGEIPRLTYRSSLGKALVSSDRAGIADSLMHRFGEIQHQEQVRKQTLLGPHRDEILFYLDGSDVKKYASQGQTRTFLIALKVALQRFLFDKKGEQSIFLLDDIFSELDQRRVERVLEMIAGFGQSLITSTEKTGLSFLHEISIHDMLYKHGDPL.

Position 30–37 (30–37) interacts with ATP; sequence GPNGSGKT.

The protein belongs to the RecF family.

It is found in the cytoplasm. Its function is as follows. The RecF protein is involved in DNA metabolism; it is required for DNA replication and normal SOS inducibility. RecF binds preferentially to single-stranded, linear DNA. It also seems to bind ATP. The protein is DNA replication and repair protein RecF of Prosthecochloris aestuarii (strain DSM 271 / SK 413).